The sequence spans 239 residues: Orotidine 5'-phosphate decarboxylase (239 aa).

Residues Asp-15, Lys-36, 63-72 (DLKFHDIPNT), Thr-127, Arg-189, Gln-198, Gly-218, and Arg-219 contribute to the substrate site. Lys-65 acts as the Proton donor in catalysis.

This sequence belongs to the OMP decarboxylase family. Type 1 subfamily. Homodimer.

The enzyme catalyses orotidine 5'-phosphate + H(+) = UMP + CO2. The protein operates within pyrimidine metabolism; UMP biosynthesis via de novo pathway; UMP from orotate: step 2/2. Functionally, catalyzes the decarboxylation of orotidine 5'-monophosphate (OMP) to uridine 5'-monophosphate (UMP). In Prochlorococcus marinus (strain MIT 9515), this protein is Orotidine 5'-phosphate decarboxylase.